The sequence spans 146 residues: Hut operon positive regulatory protein (146 aa).

Belongs to the HutP family. In terms of assembly, homohexamer.

Functionally, antiterminator that binds to cis-acting regulatory sequences on the mRNA in the presence of histidine, thereby suppressing transcription termination and activating the hut operon for histidine utilization. The protein is Hut operon positive regulatory protein of Bacillus cereus (strain ZK / E33L).